Consider the following 307-residue polypeptide: Ornithine carbamoyltransferase (307 aa).

Carbamoyl phosphate-binding positions include 56 to 59 (STRT), Q83, R107, and 134 to 137 (HPCQ). L-ornithine-binding positions include N165, D223, and 227 to 228 (SM). Carbamoyl phosphate contacts are provided by residues 263 to 264 (CL) and R291.

It belongs to the aspartate/ornithine carbamoyltransferase superfamily. OTCase family.

It localises to the cytoplasm. It carries out the reaction carbamoyl phosphate + L-ornithine = L-citrulline + phosphate + H(+). The protein operates within amino-acid degradation; L-arginine degradation via ADI pathway; carbamoyl phosphate from L-arginine: step 2/2. Its function is as follows. Reversibly catalyzes the transfer of the carbamoyl group from carbamoyl phosphate (CP) to the N(epsilon) atom of ornithine (ORN) to produce L-citrulline. This is Ornithine carbamoyltransferase from Cupriavidus taiwanensis (strain DSM 17343 / BCRC 17206 / CCUG 44338 / CIP 107171 / LMG 19424 / R1) (Ralstonia taiwanensis (strain LMG 19424)).